A 29-amino-acid chain; its full sequence is Toxin TdII-3 (29 aa).

In terms of domain architecture, LCN-type CS-alpha/beta spans 1-29 (KDGYLVGTDGCKYGCFTRPGHFCANEECL).

This sequence belongs to the long (4 C-C) scorpion toxin superfamily. Sodium channel inhibitor family. Beta subfamily. As to expression, expressed by the venom gland.

It localises to the secreted. Binds voltage-independently to sodium channels (Nav) and shifts the voltage of activation toward more negative potentials. This toxin is active against mammals and also affects neuromuscular preparations of frog. This chain is Toxin TdII-3, found in Tityus discrepans (Venezuelan scorpion).